The primary structure comprises 488 residues: 26S proteasome non-ATPase regulatory subunit 3 homolog A (488 aa).

The 182-residue stretch at 240–421 (CRYLFYLGKI…GCMVSKETGD (182 aa)) folds into the PCI domain. The interval 451-488 (RFPPNTHKEKESDEKRRERKQQEEELAKHMAEEDDDDF) is disordered. The span at 456–481 (THKEKESDEKRRERKQQEEELAKHMA) shows a compositional bias: basic and acidic residues.

Belongs to the proteasome subunit S3 family. Component of the 19S regulatory particle (RP/PA700) lid subcomplex of the 26S proteasome. The 26S proteasome is composed of a core protease (CP), known as the 20S proteasome, capped at one or both ends by the 19S regulatory particle (RP/PA700). The RP/PA700 complex is composed of at least 17 different subunits in two subcomplexes, the base and the lid, which form the portions proximal and distal to the 20S proteolytic core, respectively. Interacts with UCH1 and UCH2. As to expression, ubiquitous with highest expression in flowers.

Its function is as follows. Acts as a regulatory subunit of the 26 proteasome which is involved in the ATP-dependent degradation of ubiquitinated proteins. The protein is 26S proteasome non-ATPase regulatory subunit 3 homolog A of Arabidopsis thaliana (Mouse-ear cress).